Reading from the N-terminus, the 205-residue chain is Putative 3-methyladenine DNA glycosylase (205 aa).

It belongs to the DNA glycosylase MPG family.

This chain is Putative 3-methyladenine DNA glycosylase, found in Staphylococcus epidermidis (strain ATCC 35984 / DSM 28319 / BCRC 17069 / CCUG 31568 / BM 3577 / RP62A).